The chain runs to 128 residues: Small ribosomal subunit protein uS11m (128 aa).

The protein belongs to the universal ribosomal protein uS11 family.

The protein resides in the mitochondrion. This Prototheca wickerhamii protein is Small ribosomal subunit protein uS11m (RPS11).